The sequence spans 199 residues: Protein shisa-like-1 (199 aa).

The signal sequence occupies residues 1 to 25 (MTSCGQQSLNVLAVLFSLLFSAVLS). The Extracellular segment spans residues 26–97 (AHFRVCEPYT…SEGYMHNNYT (72 aa)). N-linked (GlcNAc...) asparagine glycans are attached at residues Asn53 and Asn95. Residues 98–118 (ALLGVWIYGFFVLMLLVLDLL) traverse the membrane as a helical segment. Residues 119-199 (YYSAMNYDIC…PLMTFQSSSA (81 aa)) are Cytoplasmic-facing. Residues 146-199 (PRRWGNPARAPRPGQRAPQPQPPPGPLPQAPQAVHTLRGDAHSPPLMTFQSSSA) form a disordered region. The span at 152-163 (PARAPRPGQRAP) shows a compositional bias: low complexity. The span at 164–174 (QPQPPPGPLPQ) shows a compositional bias: pro residues.

It belongs to the shisa family.

It is found in the membrane. In Homo sapiens (Human), this protein is Protein shisa-like-1.